The chain runs to 638 residues: 1-deoxy-D-xylulose-5-phosphate synthase (638 aa).

Thiamine diphosphate contacts are provided by residues histidine 77 and 118–120 (AHA). Aspartate 149 lines the Mg(2+) pocket. Residues 150–151 (GS), asparagine 178, tyrosine 287, and glutamate 369 contribute to the thiamine diphosphate site. Asparagine 178 contacts Mg(2+).

It belongs to the transketolase family. DXPS subfamily. As to quaternary structure, homodimer. Requires Mg(2+) as cofactor. Thiamine diphosphate serves as cofactor.

It catalyses the reaction D-glyceraldehyde 3-phosphate + pyruvate + H(+) = 1-deoxy-D-xylulose 5-phosphate + CO2. It participates in metabolic intermediate biosynthesis; 1-deoxy-D-xylulose 5-phosphate biosynthesis; 1-deoxy-D-xylulose 5-phosphate from D-glyceraldehyde 3-phosphate and pyruvate: step 1/1. Its function is as follows. Catalyzes the acyloin condensation reaction between C atoms 2 and 3 of pyruvate and glyceraldehyde 3-phosphate to yield 1-deoxy-D-xylulose-5-phosphate (DXP). This is 1-deoxy-D-xylulose-5-phosphate synthase from Phenylobacterium zucineum (strain HLK1).